Here is a 110-residue protein sequence, read N- to C-terminus: U32-theraphotoxin-Cg1a (110 aa).

A signal peptide spans 1–19 (MKHCFLILFTLIVFTVVWS). A propeptide spanning residues 20 to 43 (LEENEEYPDEDEMIESFMDGYSYR) is cleaved from the precursor. Intrachain disulfides connect Cys49-Cys63, Cys56-Cys69, Cys60-Cys105, and Cys62-Cys80.

It belongs to the neurotoxin 03 (Tx2) family. 02 subfamily. In terms of tissue distribution, expressed by the venom gland.

The protein resides in the secreted. Its function is as follows. Probable ion channel inhibitor. The protein is U32-theraphotoxin-Cg1a of Chilobrachys guangxiensis (Chinese earth tiger tarantula).